A 233-amino-acid polypeptide reads, in one-letter code: Endonuclease V (233 aa).

Asp48 and Asp116 together coordinate Mg(2+).

The protein belongs to the endonuclease V family. Mg(2+) serves as cofactor.

The protein localises to the cytoplasm. It carries out the reaction Endonucleolytic cleavage at apurinic or apyrimidinic sites to products with a 5'-phosphate.. Its function is as follows. DNA repair enzyme involved in the repair of deaminated bases. Selectively cleaves double-stranded DNA at the second phosphodiester bond 3' to a deoxyinosine leaving behind the intact lesion on the nicked DNA. This Streptomyces coelicolor (strain ATCC BAA-471 / A3(2) / M145) protein is Endonuclease V.